The following is a 178-amino-acid chain: Aspartate carbamoyltransferase regulatory chain (178 aa).

Positions 1–15 are enriched in basic and acidic residues; the sequence is MNDREPNQKESKESV. Positions 1-23 are disordered; sequence MNDREPNQKESKESVNDAVPRAR. The Zn(2+) site is built by C133, C138, C159, and C162.

This sequence belongs to the PyrI family. Contains catalytic and regulatory chains. The cofactor is Zn(2+).

Its function is as follows. Involved in allosteric regulation of aspartate carbamoyltransferase. The sequence is that of Aspartate carbamoyltransferase regulatory chain from Haloquadratum walsbyi (strain DSM 16790 / HBSQ001).